Here is a 431-residue protein sequence, read N- to C-terminus: Levansucrase LscC (431 aa).

Positions 61, 62, 148, 218, and 219 each coordinate sucrose. Asp62 (nucleophile) is an active-site residue. The active-site Proton donor/acceptor is the Glu303.

The protein belongs to the glycosyl hydrolase 68 family.

The protein localises to the periplasm. It catalyses the reaction [6)-beta-D-fructofuranosyl-(2-&gt;](n) alpha-D-glucopyranoside + sucrose = [6)-beta-D-fructofuranosyl-(2-&gt;](n+1) alpha-D-glucopyranoside + D-glucose. Functionally, catalyzes the synthesis of levan, a fructose polymer, by transferring the fructosyl moiety from sucrose to a growing acceptor molecule. This chain is Levansucrase LscC, found in Pseudomonas savastanoi pv. glycinea (Pseudomonas syringae pv. glycinea).